We begin with the raw amino-acid sequence, 433 residues long: Glutamate-1-semialdehyde 2,1-aminomutase (433 aa).

Lys266 carries the N6-(pyridoxal phosphate)lysine modification.

Belongs to the class-III pyridoxal-phosphate-dependent aminotransferase family. HemL subfamily. In terms of assembly, homodimer. Pyridoxal 5'-phosphate serves as cofactor.

Its subcellular location is the cytoplasm. It catalyses the reaction (S)-4-amino-5-oxopentanoate = 5-aminolevulinate. It participates in porphyrin-containing compound metabolism; protoporphyrin-IX biosynthesis; 5-aminolevulinate from L-glutamyl-tRNA(Glu): step 2/2. This Psychrobacter arcticus (strain DSM 17307 / VKM B-2377 / 273-4) protein is Glutamate-1-semialdehyde 2,1-aminomutase.